The sequence spans 337 residues: Undecaprenyl-phosphate 4-deoxy-4-formamido-L-arabinose transferase (337 aa).

2 helical membrane passes run 235-255 and 270-290; these read LSII…LLII and FVLF…MGLL.

It belongs to the glycosyltransferase 2 family.

It localises to the cell inner membrane. It catalyses the reaction UDP-4-deoxy-4-formamido-beta-L-arabinose + di-trans,octa-cis-undecaprenyl phosphate = 4-deoxy-4-formamido-alpha-L-arabinopyranosyl di-trans,octa-cis-undecaprenyl phosphate + UDP. Its pathway is glycolipid biosynthesis; 4-amino-4-deoxy-alpha-L-arabinose undecaprenyl phosphate biosynthesis; 4-amino-4-deoxy-alpha-L-arabinose undecaprenyl phosphate from UDP-4-deoxy-4-formamido-beta-L-arabinose and undecaprenyl phosphate: step 1/2. It functions in the pathway bacterial outer membrane biogenesis; lipopolysaccharide biosynthesis. In terms of biological role, catalyzes the transfer of 4-deoxy-4-formamido-L-arabinose from UDP to undecaprenyl phosphate. The modified arabinose is attached to lipid A and is required for resistance to polymyxin and cationic antimicrobial peptides. The chain is Undecaprenyl-phosphate 4-deoxy-4-formamido-L-arabinose transferase from Pseudomonas savastanoi pv. phaseolicola (strain 1448A / Race 6) (Pseudomonas syringae pv. phaseolicola (strain 1448A / Race 6)).